The primary structure comprises 612 residues: Threonine--tRNA ligase (612 aa).

Positions D218–P509 are catalytic. Zn(2+) contacts are provided by C310, H361, and H486.

Belongs to the class-II aminoacyl-tRNA synthetase family. As to quaternary structure, homodimer. The cofactor is Zn(2+).

It localises to the cytoplasm. The catalysed reaction is tRNA(Thr) + L-threonine + ATP = L-threonyl-tRNA(Thr) + AMP + diphosphate + H(+). In terms of biological role, catalyzes the attachment of threonine to tRNA(Thr) in a two-step reaction: L-threonine is first activated by ATP to form Thr-AMP and then transferred to the acceptor end of tRNA(Thr). Also edits incorrectly charged L-seryl-tRNA(Thr). The protein is Threonine--tRNA ligase of Helicobacter pylori (strain ATCC 700392 / 26695) (Campylobacter pylori).